The primary structure comprises 811 residues: Ribosome biogenesis protein ERB1 (811 aa).

The span at 1–11 (MARNSKATDTP) shows a compositional bias: polar residues. Residues 1 to 138 (MARNSKATDT…VHTKFSDGRP (138 aa)) form a disordered region. The segment covering 27–96 (EDAEESSSDE…LSDVDSEEFS (70 aa)) has biased composition (acidic residues). The span at 104 to 121 (ASITDKLSGTKIRSYSNA) shows a compositional bias: polar residues. Positions 128 to 138 (EVHTKFSDGRP) are enriched in basic and acidic residues. The required for interaction with NOP7 stretch occupies residues 270 to 386 (RFVPSKHEAK…LRKVPGYQEG (117 aa)). The segment at 386 to 422 (GLRERFERCLDLYLAPRTRHNKLNIDPDSLIPELPSP) is required for interaction with YTM1. WD repeat units lie at residues 438–477 (GHTEKIRTLSISPDGLWLATGSDDGSVRIWEILTGRQVYK) and 485–525 (NTDD…FDIE). Residues 547–566 (TKNSNIKVNSDDEDEEVEKA) are disordered. WD repeat units follow at residues 595–637 (QCRK…SQSP), 640–678 (KSKGIIMDAKFHPFKPQLFVASQRYIRIYDLAQQVLVKK), 681–720 (PGARWLSNIDIHPRGDNLLASSYDKRVLWHDLDLSSTPYK), 724–764 (YHDK…DLMT), and 780–811 (INSLGVLDLVWHPKEAWLFSAGADGTARLWTT).

This sequence belongs to the WD repeat BOP1/ERB1 family. As to quaternary structure, component of the NOP7 complex, composed of ERB1, NOP7 and YTM1. The complex is held together by ERB1, which interacts with NOP7 via its N-terminal domain and with YTM1 via a high-affinity interaction between the seven-bladed beta-propeller domains of the 2 proteins. The NOP7 complex associates with the 66S pre-ribosome.

It is found in the nucleus. The protein localises to the nucleolus. Its subcellular location is the nucleoplasm. Component of the NOP7 complex, which is required for maturation of the 25S and 5.8S ribosomal RNAs and formation of the 60S ribosome. The chain is Ribosome biogenesis protein ERB1 from Debaryomyces hansenii (strain ATCC 36239 / CBS 767 / BCRC 21394 / JCM 1990 / NBRC 0083 / IGC 2968) (Yeast).